The chain runs to 228 residues: Probable septum site-determining protein MinC (228 aa).

The protein belongs to the MinC family. In terms of assembly, interacts with MinD and FtsZ.

Its function is as follows. Cell division inhibitor that blocks the formation of polar Z ring septums. Rapidly oscillates between the poles of the cell to destabilize FtsZ filaments that have formed before they mature into polar Z rings. Prevents FtsZ polymerization. This is Probable septum site-determining protein MinC from Bacillus cereus (strain G9842).